Reading from the N-terminus, the 262-residue chain is Tritrans,polycis-undecaprenyl-diphosphate synthase (geranylgeranyl-diphosphate specific) (262 aa).

Asp-40 is an active-site residue. Residue Asp-40 participates in Mg(2+) binding. Residues 41–44 (GNRR), Trp-45, and 85–87 (STE) contribute to the substrate site. The active-site Proton acceptor is Asn-88. Substrate contacts are provided by residues Arg-92, Arg-211, and 217–219 (RIS). Glu-230 contributes to the Mg(2+) binding site.

This sequence belongs to the UPP synthase family. Homodimer. Mg(2+) serves as cofactor.

It carries out the reaction geranylgeranyl diphosphate + 7 isopentenyl diphosphate = tri-trans,hepta-cis-undecaprenyl diphosphate + 7 diphosphate. Functionally, catalyzes the sequential condensation of isopentenyl diphosphate (IPP) with geranylgeranyl diphosphate (GGPP) to yield (2Z,6Z,10Z,14Z,18Z,22Z,26Z,30E,34E,38E)-undecaprenyl diphosphate (tritrans,heptacis-UPP). It is probably the precursor of glycosyl carrier lipids. This is Tritrans,polycis-undecaprenyl-diphosphate synthase (geranylgeranyl-diphosphate specific) from Sulfurisphaera tokodaii (strain DSM 16993 / JCM 10545 / NBRC 100140 / 7) (Sulfolobus tokodaii).